Here is a 258-residue protein sequence, read N- to C-terminus: Imidazole glycerol phosphate synthase subunit HisF (258 aa).

Active-site residues include aspartate 11 and aspartate 130.

Belongs to the HisA/HisF family. As to quaternary structure, heterodimer of HisH and HisF.

Its subcellular location is the cytoplasm. It carries out the reaction 5-[(5-phospho-1-deoxy-D-ribulos-1-ylimino)methylamino]-1-(5-phospho-beta-D-ribosyl)imidazole-4-carboxamide + L-glutamine = D-erythro-1-(imidazol-4-yl)glycerol 3-phosphate + 5-amino-1-(5-phospho-beta-D-ribosyl)imidazole-4-carboxamide + L-glutamate + H(+). It participates in amino-acid biosynthesis; L-histidine biosynthesis; L-histidine from 5-phospho-alpha-D-ribose 1-diphosphate: step 5/9. In terms of biological role, IGPS catalyzes the conversion of PRFAR and glutamine to IGP, AICAR and glutamate. The HisF subunit catalyzes the cyclization activity that produces IGP and AICAR from PRFAR using the ammonia provided by the HisH subunit. In Lachnoclostridium phytofermentans (strain ATCC 700394 / DSM 18823 / ISDg) (Clostridium phytofermentans), this protein is Imidazole glycerol phosphate synthase subunit HisF.